Here is a 142-residue protein sequence, read N- to C-terminus: Salivary protein 15b (142 aa).

The first 20 residues, 1 to 20 (MKYLGLALISAVFLIGTCQA), serve as a signal peptide directing secretion. Cystine bridges form between cysteine 27-cysteine 44, cysteine 40-cysteine 108, and cysteine 91-cysteine 117.

It belongs to the PBP/GOBP family. Female salivary gland.

Its subcellular location is the secreted. Inhibits contact coagulation pathway activation in the host by sequestering anionic polymers, such as dextran sulfate and heparin, and thus blocking interaction of protein components of the pathway with negatively charged surfaces. Inhibits dextran sulfate-mediated autoactivation of host coagulation factor XII (F12). Inhibits dextran sulfate-mediated activation of host factor XI (F11) by activated F12. Inhibits polyphosphate-induced plasma extravasation at the injection site in mouse model, probably via inhibition of bradykinin generation in host skin. The polypeptide is Salivary protein 15b (Phlebotomus duboscqi (Sandfly)).